Consider the following 450-residue polypeptide: MREVISLNVGQAGCQIANSCWELYCLEHGIQPDGYLTEERKAAEDDDGFSTFFSETGNGKYVPRTIYADLEPNVVDEVRTGTYRSLFHPELMITGKEDASNNYARGHYTVGKELIDQVLDKVRHVADNCSGLQGFLVFHSFGGGTGSGFGALLMERLSVDYGKKCKLEFCVYPAPQVATSVVEPYNSILTTHTTLEHSDCSFMVDNEAIYDICRRNLGIERPNYENLNRLIAQVVSSITASLRFDGSLNVDLNEFQTNLVPYPRIHFPLVAYAPIVSAAKAAHEANSVQEISMSCFEPNSQMVKCDPRNGKYMATCLLYRGDVVPKDVHQAVATLKTKRTIQFVDWCPTGFKIGICYQPPQNVPNGDLAKVNRAVCMLSNTTAIAEAWSALSHKFDLMYSKRAFVHWYVGEGMEEGEFSEAREDLAALERDYEEVAADSAEGDEGGEAEY.

Positions 11, 71, 140, 144, 145, 179, 206, and 228 each coordinate GTP. Residue E71 coordinates Mg(2+). Residue E254 is part of the active site.

Belongs to the tubulin family. Dimer of alpha and beta chains. A typical microtubule is a hollow water-filled tube with an outer diameter of 25 nm and an inner diameter of 15 nM. Alpha-beta heterodimers associate head-to-tail to form protofilaments running lengthwise along the microtubule wall with the beta-tubulin subunit facing the microtubule plus end conferring a structural polarity. Microtubules usually have 13 protofilaments but different protofilament numbers can be found in some organisms and specialized cells. The cofactor is Mg(2+).

The protein localises to the cytoplasm. It localises to the cytoskeleton. It carries out the reaction GTP + H2O = GDP + phosphate + H(+). In terms of biological role, tubulin is the major constituent of microtubules, a cylinder consisting of laterally associated linear protofilaments composed of alpha- and beta-tubulin heterodimers. Microtubules grow by the addition of GTP-tubulin dimers to the microtubule end, where a stabilizing cap forms. Below the cap, tubulin dimers are in GDP-bound state, owing to GTPase activity of alpha-tubulin. The protein is Tubulin alpha chain of Zymoseptoria tritici (Speckled leaf blotch fungus).